The chain runs to 239 residues: RNA polymerase sigma factor FliA (239 aa).

The tract at residues 16 to 88 (LWQRYVPLVR…MLDELRSRDW (73 aa)) is sigma-70 factor domain-2. The Interaction with polymerase core subunit RpoC motif lies at 43 to 46 (DLLQ). Residues 96-166 (NAREVAQAMG…IELVTEEHQQ (71 aa)) are sigma-70 factor domain-3. The tract at residues 185–233 (AIESLPEREQLVLTLYYQEELNLKEIGAVLEVGESRVSQLHSQAIKRLR) is sigma-70 factor domain-4. Residues 207–226 (LKEIGAVLEVGESRVSQLHS) constitute a DNA-binding region (H-T-H motif).

It belongs to the sigma-70 factor family. FliA subfamily.

It is found in the cytoplasm. In terms of biological role, sigma factors are initiation factors that promote the attachment of RNA polymerase to specific initiation sites and are then released. This sigma factor controls the expression of flagella-related genes. The polypeptide is RNA polymerase sigma factor FliA (Salmonella typhi).